Reading from the N-terminus, the 245-residue chain is 1-(5-phosphoribosyl)-5-[(5-phosphoribosylamino)methylideneamino] imidazole-4-carboxamide isomerase (245 aa).

The Proton acceptor role is filled by Asp7. The active-site Proton donor is Asp129.

Belongs to the HisA/HisF family.

Its subcellular location is the cytoplasm. The enzyme catalyses 1-(5-phospho-beta-D-ribosyl)-5-[(5-phospho-beta-D-ribosylamino)methylideneamino]imidazole-4-carboxamide = 5-[(5-phospho-1-deoxy-D-ribulos-1-ylimino)methylamino]-1-(5-phospho-beta-D-ribosyl)imidazole-4-carboxamide. Its pathway is amino-acid biosynthesis; L-histidine biosynthesis; L-histidine from 5-phospho-alpha-D-ribose 1-diphosphate: step 4/9. In Shewanella baltica (strain OS155 / ATCC BAA-1091), this protein is 1-(5-phosphoribosyl)-5-[(5-phosphoribosylamino)methylideneamino] imidazole-4-carboxamide isomerase.